A 328-amino-acid polypeptide reads, in one-letter code: Tetraacyldisaccharide 4'-kinase (328 aa).

59-66 (TAGGNGKT) is a binding site for ATP.

This sequence belongs to the LpxK family.

It catalyses the reaction a lipid A disaccharide + ATP = a lipid IVA + ADP + H(+). It participates in glycolipid biosynthesis; lipid IV(A) biosynthesis; lipid IV(A) from (3R)-3-hydroxytetradecanoyl-[acyl-carrier-protein] and UDP-N-acetyl-alpha-D-glucosamine: step 6/6. In terms of biological role, transfers the gamma-phosphate of ATP to the 4'-position of a tetraacyldisaccharide 1-phosphate intermediate (termed DS-1-P) to form tetraacyldisaccharide 1,4'-bis-phosphate (lipid IVA). The polypeptide is Tetraacyldisaccharide 4'-kinase (Aliivibrio fischeri (strain ATCC 700601 / ES114) (Vibrio fischeri)).